The following is a 75-amino-acid chain: Ribonuclease pancreatic (75 aa).

Cystine bridges form between cysteine 7-cysteine 65 and cysteine 46-cysteine 53. An N-linked (GlcNAc...) asparagine glycan is attached at asparagine 15. Substrate-binding positions include 22-26 (KPVNT), lysine 47, and arginine 66.

This sequence belongs to the pancreatic ribonuclease family. Monomer. Interacts with and forms tight 1:1 complexes with RNH1. Dimerization of two such complexes may occur. Interaction with RNH1 inhibits this protein. In terms of tissue distribution, pancreas.

Its subcellular location is the secreted. It carries out the reaction an [RNA] containing cytidine + H2O = an [RNA]-3'-cytidine-3'-phosphate + a 5'-hydroxy-ribonucleotide-3'-[RNA].. The enzyme catalyses an [RNA] containing uridine + H2O = an [RNA]-3'-uridine-3'-phosphate + a 5'-hydroxy-ribonucleotide-3'-[RNA].. Endonuclease that catalyzes the cleavage of RNA on the 3' side of pyrimidine nucleotides. Acts on single-stranded and double-stranded RNA. The polypeptide is Ribonuclease pancreatic (rnase1) (Oryx leucoryx (Arabian oryx)).